The chain runs to 238 residues: Dolichyldiphosphatase 1 (238 aa).

The next 4 membrane-spanning stretches (helical) occupy residues 33–53 (LAYL…LIIF), 100–120 (PSSH…FLYL), 130–150 (FLDL…AFLV), and 162–182 (WSQV…WFIF).

It belongs to the dolichyldiphosphatase family.

It is found in the endoplasmic reticulum membrane. It catalyses the reaction a di-trans,poly-cis-dolichyl diphosphate + H2O = a di-trans,poly-cis-dolichyl phosphate + phosphate + H(+). It functions in the pathway protein modification; protein glycosylation. Required for efficient N-glycosylation. Necessary for maintaining optimal levels of dolichol-linked oligosaccharides. Hydrolyzes dolichyl pyrophosphate at a very high rate and dolichyl monophosphate at a much lower rate. Does not act on phosphatidate. This is Dolichyldiphosphatase 1 (DOLPP1) from Homo sapiens (Human).